A 592-amino-acid chain; its full sequence is Thiol:disulfide interchange protein DsbD (592 aa).

Positions 1–19 (MKLIASFSIFMLMSIWSFA) are cleaved as a signal peptide. Intrachain disulfides connect C130–C136 and C204–C326. Helical transmembrane passes span 186–206 (IWVL…PCVF), 229–249 (FVLS…LGLV), 265–285 (IILG…FGAW), 318–338 (ISGL…LLYI), 345–365 (LLGF…LILF), 379–399 (WMNI…LMFV), 406–426 (MATD…FYVM), and 440–460 (ALVI…TIFG). The region spanning 443-592 (IFIGLFASAM…AFAAHAKNIL (150 aa)) is the Thioredoxin domain. C508 and C511 form a disulfide bridge.

Belongs to the thioredoxin family. DsbD subfamily.

It is found in the cell inner membrane. The catalysed reaction is [protein]-dithiol + NAD(+) = [protein]-disulfide + NADH + H(+). It catalyses the reaction [protein]-dithiol + NADP(+) = [protein]-disulfide + NADPH + H(+). Its function is as follows. Required to facilitate the formation of correct disulfide bonds in some periplasmic proteins and for the assembly of the periplasmic c-type cytochromes. Acts by transferring electrons from cytoplasmic thioredoxin to the periplasm. This transfer involves a cascade of disulfide bond formation and reduction steps. This Pseudoalteromonas atlantica (strain T6c / ATCC BAA-1087) protein is Thiol:disulfide interchange protein DsbD.